The chain runs to 461 residues: Cysteine--tRNA ligase (461 aa).

Residue C28 coordinates Zn(2+). A 'HIGH' region motif is present at residues 30–40; it reads ITVYDLCHIGH. Zn(2+) is bound by residues C209, H234, and E238. Positions 266–270 match the 'KMSKS' region motif; the sequence is KMSKS. Position 269 (K269) interacts with ATP.

Belongs to the class-I aminoacyl-tRNA synthetase family. Monomer. The cofactor is Zn(2+).

It localises to the cytoplasm. It catalyses the reaction tRNA(Cys) + L-cysteine + ATP = L-cysteinyl-tRNA(Cys) + AMP + diphosphate. This is Cysteine--tRNA ligase from Enterobacter sp. (strain 638).